A 94-amino-acid chain; its full sequence is Transcription factor PRE6 (94 aa).

The tract at residues 1–20 (MSSRRSSRSRQSGSSRISDD) is disordered. The bHLH domain occupies 6–60 (SSRSRQSGSSRISDDQISDLVSKLQHLIPELRRRRSDKVSASKVLQETCNYIRNL).

The protein belongs to the bHLH protein family. As to quaternary structure, interacts with HFR1.

The protein localises to the cytoplasm. It is found in the nucleus. Its function is as follows. Atypical and probable non DNA-binding bHLH transcription factor that regulates light-mediated responses in day light conditions by binding and inhibiting the activity of the bHLH transcription factor HFR1, a critical regulator of light signaling and shade avoidance. Forms non-functional heterodimers with HFR1, causing liberation and activation of PIF4 from the transcriptionally inactive HFR1-PIF4 complex. The protein is Transcription factor PRE6 (PRE6) of Arabidopsis thaliana (Mouse-ear cress).